The primary structure comprises 303 residues: Mevalonate kinase (303 aa).

90–100 is an ATP binding site; the sequence is PAGSGLGSSAA. Residue Asp141 is the Proton acceptor of the active site.

Belongs to the GHMP kinase family. Mevalonate kinase subfamily. Homodimer. The cofactor is Mg(2+).

The protein resides in the cytoplasm. It carries out the reaction (R)-mevalonate + ATP = (R)-5-phosphomevalonate + ADP + H(+). Its pathway is isoprenoid biosynthesis; isopentenyl diphosphate biosynthesis via mevalonate pathway; isopentenyl diphosphate from (R)-mevalonate: step 1/3. In terms of biological role, catalyzes the phosphorylation of (R)-mevalonate (MVA) to (R)-mevalonate 5-phosphate (MVAP). Functions in the mevalonate (MVA) pathway leading to isopentenyl diphosphate (IPP), a key precursor for the biosynthesis of isoprenoid compounds such as archaeal membrane lipids. This chain is Mevalonate kinase, found in Methanothermobacter thermautotrophicus (strain ATCC 29096 / DSM 1053 / JCM 10044 / NBRC 100330 / Delta H) (Methanobacterium thermoautotrophicum).